The primary structure comprises 277 residues: SF-assemblin (277 aa).

The disordered stretch occupies residues 1 to 20 (MATSGMVSPTSGRPFSPMRS). The segment at 1-27 (MATSGMVSPTSGRPFSPMRSSVLTTTG) is nonhelical region. The segment at 28-277 (SAIKLEHVSE…KMVNMQHNSA (250 aa)) is rod. Residues 70–90 (RLEKSMEAEVKRRAESDKQLQ) adopt a coiled-coil conformation.

Belongs to the SF-assemblin family. In terms of processing, the N-terminus is blocked.

It localises to the cytoplasm. The protein localises to the cytoskeleton. Major component of the striated microtubule-associated fibers (SMAFs; system-I-fibers). The chain is SF-assemblin from Dunaliella bioculata (Green alga).